Consider the following 30-residue polypeptide: Cyclotide mden-G (30 aa).

The segment at residues Gly-1 to Asn-30 is a cross-link (cyclopeptide (Gly-Asn)). Disulfide bonds link Cys-4–Cys-20, Cys-8–Cys-22, and Cys-13–Cys-27.

It belongs to the cyclotide family. Bracelet subfamily. Post-translationally, this is a cyclic peptide.

Probably participates in a plant defense mechanism. The sequence is that of Cyclotide mden-G from Melicytus dentatus (Tree violet).